We begin with the raw amino-acid sequence, 106 residues long: ATP-dependent Clp protease adapter protein ClpS (106 aa).

Belongs to the ClpS family. Binds to the N-terminal domain of the chaperone ClpA.

In terms of biological role, involved in the modulation of the specificity of the ClpAP-mediated ATP-dependent protein degradation. The polypeptide is ATP-dependent Clp protease adapter protein ClpS (Escherichia coli O127:H6 (strain E2348/69 / EPEC)).